The chain runs to 560 residues: Alpha-keto-acid decarboxylase (560 aa).

Glu-61 is a thiamine diphosphate binding site. The segment at 396 to 478 (TSFYGMADHR…VVVNNDGYTV (83 aa)) is thiamine pyrophosphate binding. Mg(2+) is bound by residues Asp-446, Asn-473, and Gly-475.

This sequence belongs to the TPP enzyme family. A metal cation serves as cofactor. Thiamine diphosphate is required as a cofactor.

Its function is as follows. Decarboxylates branched-chain and aromatic alpha-keto acids to aldehydes. The protein is Alpha-keto-acid decarboxylase (kdc) of Mycobacterium tuberculosis (strain CDC 1551 / Oshkosh).